A 473-amino-acid chain; its full sequence is MTKENWETVIGLEVHAQVSSKTKLFSSSLTEFGTEHNTQVSLVDAAMPGTLPILNYFCIEQAICTGLAISAEINKCSYFDRKNYFYPDLPQGYQITQFFEPIVKNGKVFINNNEKEIRIARIHLEQDAGKSIHEESKTYVDLNRAGVALMEIVSEPDLRSSAEAAEFMKKLRQILRYIGSCDGDMEKGSLRCDANVSVRPNGSSAFGTRCEIKNLNSIRYIVQAIDYEAQRQIKILESGGEISQDTLLFDVTLGKTKVMRSKEDSSDYRYFPEPDLLPVEISQDKIDSIKSSLPELPDQKKLRYINELGINEYDADVITSDKATADYFEELIKKHDSKIAVTWLTVELFGRLNKANIDIVSSPIKADALSELLDFIVDGTISAKLGKQVFDIMFETGKPASLIIEEQDLKQITDRDQISEIIDTIVNNNQDKVQEYKSGKTKLYGFFVGEVMKSTKGKASPDVVNLVLSERLG.

This sequence belongs to the GatB/GatE family. GatB subfamily. As to quaternary structure, heterotrimer of A, B and C subunits.

The enzyme catalyses L-glutamyl-tRNA(Gln) + L-glutamine + ATP + H2O = L-glutaminyl-tRNA(Gln) + L-glutamate + ADP + phosphate + H(+). The catalysed reaction is L-aspartyl-tRNA(Asn) + L-glutamine + ATP + H2O = L-asparaginyl-tRNA(Asn) + L-glutamate + ADP + phosphate + 2 H(+). Its function is as follows. Allows the formation of correctly charged Asn-tRNA(Asn) or Gln-tRNA(Gln) through the transamidation of misacylated Asp-tRNA(Asn) or Glu-tRNA(Gln) in organisms which lack either or both of asparaginyl-tRNA or glutaminyl-tRNA synthetases. The reaction takes place in the presence of glutamine and ATP through an activated phospho-Asp-tRNA(Asn) or phospho-Glu-tRNA(Gln). The polypeptide is Aspartyl/glutamyl-tRNA(Asn/Gln) amidotransferase subunit B (Wolbachia pipientis subsp. Culex pipiens (strain wPip)).